Reading from the N-terminus, the 381-residue chain is Arginine biosynthesis bifunctional protein ArgJ (381 aa).

Substrate contacts are provided by threonine 143, lysine 165, threonine 176, glutamate 255, asparagine 376, and threonine 381. Catalysis depends on threonine 176, which acts as the Nucleophile.

It belongs to the ArgJ family. In terms of assembly, heterotetramer of two alpha and two beta chains.

It localises to the cytoplasm. It catalyses the reaction N(2)-acetyl-L-ornithine + L-glutamate = N-acetyl-L-glutamate + L-ornithine. The catalysed reaction is L-glutamate + acetyl-CoA = N-acetyl-L-glutamate + CoA + H(+). It functions in the pathway amino-acid biosynthesis; L-arginine biosynthesis; L-ornithine and N-acetyl-L-glutamate from L-glutamate and N(2)-acetyl-L-ornithine (cyclic): step 1/1. The protein operates within amino-acid biosynthesis; L-arginine biosynthesis; N(2)-acetyl-L-ornithine from L-glutamate: step 1/4. In terms of biological role, catalyzes two activities which are involved in the cyclic version of arginine biosynthesis: the synthesis of N-acetylglutamate from glutamate and acetyl-CoA as the acetyl donor, and of ornithine by transacetylation between N(2)-acetylornithine and glutamate. This chain is Arginine biosynthesis bifunctional protein ArgJ, found in Thermus thermophilus (strain ATCC BAA-163 / DSM 7039 / HB27).